A 154-amino-acid chain; its full sequence is Protein X (154 aa).

A mitochondrial targeting sequence region spans residues 68 to 117; that stretch reads PCALRFTSARRMETTVNAHQILPKVLHKRTLGLSAMSTTDLEAYFKDCLF.

This sequence belongs to the orthohepadnavirus protein X family. As to quaternary structure, may form homodimer. May interact with host CEBPA, CFLAR, CREB1, DDB1, E4F1, HBXIP, HSPD1/HSP60, NFKBIA, POLR2E and SMAD4. Interacts with host SMC5-SMC6 complex and induces its degradation. Interacts with host TRPC4AP; leading to prevent ubiquitination of TRPC4AP. Interacts with host PLSCR1; this interaction promotes ubiquitination and degradation of HBx and impairs HBx-mediated cell proliferation. A fraction may be phosphorylated in insect cells and HepG2 cells, a human hepatoblastoma cell line. Phosphorylated in vitro by host protein kinase C or mitogen-activated protein kinase. N-acetylated in insect cells.

The protein localises to the host cytoplasm. It is found in the host nucleus. It localises to the host mitochondrion. In terms of biological role, multifunctional protein that plays a role in silencing host antiviral defenses and promoting viral transcription. Does not seem to be essential for HBV infection. May be directly involved in development of cirrhosis and liver cancer (hepatocellular carcinoma). Most of cytosolic activities involve modulation of cytosolic calcium. The effect on apoptosis is controversial depending on the cell types in which the studies have been conducted. May induce apoptosis by localizing in mitochondria and causing loss of mitochondrial membrane potential. May also modulate apoptosis by binding host CFLAR, a key regulator of the death-inducing signaling complex (DISC). Promotes viral transcription by using the host E3 ubiquitin ligase DDB1 to target the SMC5-SMC6 complex to proteasomal degradation. This host complex would otherwise bind to viral episomal DNA, and prevents its transcription. Moderately stimulates transcription of many different viral and cellular transcription elements. Promoters and enhancers stimulated by HBx contain DNA binding sites for NF-kappa-B, AP-1, AP-2, c-EBP, ATF/CREB, or the calcium-activated factor NF-AT. The chain is Protein X from Hepatitis B virus genotype E (isolate Chimpanzee/Ch195/1999) (HBV-E).